A 264-amino-acid polypeptide reads, in one-letter code: Thymidylate synthase (264 aa).

DUMP is bound at residue Arg21. His51 lines the (6R)-5,10-methylene-5,6,7,8-tetrahydrofolate pocket. 126 to 127 (RR) is a binding site for dUMP. The active-site Nucleophile is the Cys146. Residues 166-169 (RSAD), Asn177, and 207-209 (HLY) each bind dUMP. Asp169 contacts (6R)-5,10-methylene-5,6,7,8-tetrahydrofolate. A (6R)-5,10-methylene-5,6,7,8-tetrahydrofolate-binding site is contributed by Ala263.

The protein belongs to the thymidylate synthase family. Bacterial-type ThyA subfamily. Homodimer.

Its subcellular location is the cytoplasm. The catalysed reaction is dUMP + (6R)-5,10-methylene-5,6,7,8-tetrahydrofolate = 7,8-dihydrofolate + dTMP. It participates in pyrimidine metabolism; dTTP biosynthesis. Catalyzes the reductive methylation of 2'-deoxyuridine-5'-monophosphate (dUMP) to 2'-deoxythymidine-5'-monophosphate (dTMP) while utilizing 5,10-methylenetetrahydrofolate (mTHF) as the methyl donor and reductant in the reaction, yielding dihydrofolate (DHF) as a by-product. This enzymatic reaction provides an intracellular de novo source of dTMP, an essential precursor for DNA biosynthesis. The chain is Thymidylate synthase from Pseudomonas aeruginosa (strain LESB58).